A 305-amino-acid polypeptide reads, in one-letter code: Protein ORANGE, chloroplastic (305 aa).

A chloroplast-targeting transit peptide spans 1–54 (MSCLGRILSVSYPPDPYGSRLSVSKLSSPGRNRRLRWRFTALDSDSSSLDSDSS). 2 consecutive transmembrane segments (helical) span residues 144–164 (VYYA…GLLA) and 197–217 (IVAS…VVEV). Positions 206-297 (VGVISALMVV…CTGMAMASEH (92 aa)) are CR-type-like. The CXXCXGXG motif repeat unit spans residues 228 to 235 (CKYCLGTG). The CXXCXXXG motif repeat unit spans residues 239–246 (CARCSSTG). Residues 272-279 (CSNCSGAG) form a CXXCXGXG motif repeat. The stretch at 283–290 (CPTCLCTG) is one CXXCXXXG motif repeat.

This sequence belongs to the orange-like family. In terms of assembly, interacts with ERF1-2. As to expression, expressed in young leaves, curds and flower buds.

Its subcellular location is the plastid. The protein resides in the chloroplast membrane. It localises to the nucleus. Functionally, involved in chromoplast differentiation. Is associated with a cellular process that triggers the differentiation of pro-plastids or other non-colored plastids into chromoplasts for carotenoid accumulation. Associated with carotenoid accumulation in de-etiolated cotyledons. Controls leaf petiole elongation by suppressing the expression of ERF1 genes. In Brassica oleracea var. botrytis (Cauliflower), this protein is Protein ORANGE, chloroplastic.